Consider the following 216-residue polypeptide: Ribosomal RNA large subunit methyltransferase E (216 aa).

Residues G60, W62, D80, D96, and D121 each contribute to the S-adenosyl-L-methionine site. The active-site Proton acceptor is K161.

This sequence belongs to the class I-like SAM-binding methyltransferase superfamily. RNA methyltransferase RlmE family.

Its subcellular location is the cytoplasm. The catalysed reaction is uridine(2552) in 23S rRNA + S-adenosyl-L-methionine = 2'-O-methyluridine(2552) in 23S rRNA + S-adenosyl-L-homocysteine + H(+). Its function is as follows. Specifically methylates the uridine in position 2552 of 23S rRNA at the 2'-O position of the ribose in the fully assembled 50S ribosomal subunit. In Pseudomonas savastanoi pv. phaseolicola (strain 1448A / Race 6) (Pseudomonas syringae pv. phaseolicola (strain 1448A / Race 6)), this protein is Ribosomal RNA large subunit methyltransferase E.